The primary structure comprises 238 residues: Dof zinc finger protein MNB1A (238 aa).

Residues 1-13 are compositionally biased toward low complexity; it reads MQEASSAAAAGAE. The disordered stretch occupies residues 1–48; it reads MQEASSAAAAGAEPGRRAAQHQFAGVDLRRPKGYAAPAPAPAVGEGDP. The Dof-type zinc finger occupies 47–101; it reads DPCPRCASRDTKFCYYNNYNTSQPRHFCKGCRRYWTKGGTLRNVPVGGGTRKKPS. Residues Cys49, Cys52, Cys74, and Cys77 each coordinate Zn(2+). Positions 85-155 are disordered; the sequence is GTLRNVPVGG…TATTTTTTSE (71 aa). Residues 119–130 are compositionally biased toward basic residues; it reads PKKKPASKKRRV. The segment covering 138–155 has biased composition (low complexity); that stretch reads ATAADPGKTATTTTTTSE.

As to expression, expressed in all tissues examined.

The protein resides in the nucleus. Functionally, transcription factor that binds specifically to a 5'-AA[AG]G-3' consensus core sequence at the MNF1-binding site. The sequence is that of Dof zinc finger protein MNB1A (MNB1A) from Zea mays (Maize).